The following is a 160-amino-acid chain: Ribosomal RNA large subunit methyltransferase H (160 aa).

S-adenosyl-L-methionine-binding positions include Leu-76, Gly-108, and 127–132; that span reads FGRMTF.

The protein belongs to the RNA methyltransferase RlmH family. In terms of assembly, homodimer.

The protein localises to the cytoplasm. The enzyme catalyses pseudouridine(1915) in 23S rRNA + S-adenosyl-L-methionine = N(3)-methylpseudouridine(1915) in 23S rRNA + S-adenosyl-L-homocysteine + H(+). Functionally, specifically methylates the pseudouridine at position 1915 (m3Psi1915) in 23S rRNA. This Methylocella silvestris (strain DSM 15510 / CIP 108128 / LMG 27833 / NCIMB 13906 / BL2) protein is Ribosomal RNA large subunit methyltransferase H.